The primary structure comprises 950 residues: UPF0182 protein P9303_14611 (950 aa).

The next 9 membrane-spanning stretches (helical) occupy residues 20–40 (LLLSIAAFWLLMRVQVEWLWF), 53–73 (WLWQLGGLLLALLVVATCQLW), 102–122 (LLGCFVVVVGDLVLLTRLAWL), 141–161 (IWALVIPLSCVFISICVMLGN), 173–193 (CFCFSISIARGWGLWSLALAI), 209–229 (FGLGQFPALAFALVVLLAQLV), 259–279 (CDVMRPLIGIILLTLSALLWL), 308–328 (SLASLAILVLAFLVIPFPWIQ), and 335–355 (LIASIIGVGAILLEVLLAPFV).

The protein belongs to the UPF0182 family.

Its subcellular location is the cell membrane. The polypeptide is UPF0182 protein P9303_14611 (Prochlorococcus marinus (strain MIT 9303)).